The sequence spans 537 residues: 4-coumarate--CoA ligase (537 aa).

6 residues coordinate ATP: S189, S190, G191, T192, T193, and K197. Residues Y239 and S243 each coordinate (E)-4-coumaroyl-AMP. Residue K260 coordinates CoA. Positions 262–331 are SBD1; sequence NLTTCLELIQ…ERFPKAIFGQ (70 aa). (E)-4-coumaroyl-AMP-binding residues include A309, Q331, G332, T336, and M344. ATP is bound by residues Q331, G332, and T336. The interval 332-399 is SBD2; the sequence is GYGMTEAGPV…IRGPEIMKGY (68 aa). 2 residues coordinate ATP: D420 and R435. (E)-4-coumaroyl-AMP contacts are provided by K437 and K441. CoA is bound by residues K443 and G444. K524 provides a ligand contact to ATP.

It belongs to the ATP-dependent AMP-binding enzyme family. It depends on Mg(2+) as a cofactor.

The catalysed reaction is (E)-4-coumarate + ATP + CoA = (E)-4-coumaroyl-CoA + AMP + diphosphate. The enzyme catalyses (E)-4-coumarate + ATP + H(+) = (E)-4-coumaroyl-AMP + diphosphate. It carries out the reaction (E)-4-coumaroyl-AMP + CoA = (E)-4-coumaroyl-CoA + AMP + H(+). The protein operates within phytoalexin biosynthesis; 3,4',5-trihydroxystilbene biosynthesis; 3,4',5-trihydroxystilbene from trans-4-coumarate: step 1/2. Its function is as follows. Carboxylate--CoA ligase that may use 4-coumarate as substrate. Follows a two-step reaction mechanism, wherein the carboxylate substrate first undergoes adenylation by ATP, followed by a thioesterification in the presence of CoA to yield the final CoA thioester. This chain is 4-coumarate--CoA ligase (4CL), found in Pinus taeda (Loblolly pine).